A 404-amino-acid chain; its full sequence is ORC1-type DNA replication protein 2 (404 aa).

ATP-binding positions include 64–68 (TGKTS), Y205, and R217.

Belongs to the CDC6/cdc18 family. Interacts with MCM.

Involved in regulation of DNA replication. Stimulates the helicase activity of MCM via stimulation of its ATPase activity. Binding to MCM may result in conformational changes in MCM, leading to catalytic ATP hydrolysis by the helicase. Directly stimulates MCM movement along single-stranded and double-stranded DNA. Does not bind DNA. In Thermoplasma acidophilum (strain ATCC 25905 / DSM 1728 / JCM 9062 / NBRC 15155 / AMRC-C165), this protein is ORC1-type DNA replication protein 2 (cdc6-2).